The primary structure comprises 444 residues: Probable D-serine dehydratase (444 aa).

K118 is modified (N6-(pyridoxal phosphate)lysine).

The protein belongs to the serine/threonine dehydratase family. DsdA subfamily. It depends on pyridoxal 5'-phosphate as a cofactor.

The enzyme catalyses D-serine = pyruvate + NH4(+). In Desulfitobacterium hafniense (strain Y51), this protein is Probable D-serine dehydratase.